Reading from the N-terminus, the 475-residue chain is UDP-glycosyltransferase 101 (475 aa).

Catalysis depends on H15, which acts as the Proton acceptor. Residue H15 participates in an anthocyanidin binding. Catalysis depends on D117, which acts as the Charge relay. The UDP-alpha-D-glucose site is built by A345, Q347, H362, W365, N366, S367, and E370. G385 contacts an anthocyanidin. The UDP-alpha-D-glucose site is built by E386 and Q387.

This sequence belongs to the UDP-glycosyltransferase family.

The catalysed reaction is (20S)-protopanaxadiol + UDP-alpha-D-glucose = (20S)-ginsenoside C-K + UDP + H(+). The enzyme catalyses (20S)-ginsenoside Rg3 + UDP-alpha-D-glucose = (20S)-ginsenoside Rd + UDP + H(+). It catalyses the reaction (20S)-protopanaxatriol + UDP-alpha-D-glucose = (20S)-ginsenoside F1 + UDP + H(+). It carries out the reaction (20S)-ginsenoside F1 + UDP-alpha-D-glucose = (20S)-ginsenoside Rg1 + UDP + H(+). Its pathway is secondary metabolite biosynthesis; terpenoid biosynthesis. In terms of biological role, component of the dammarane-type triterpene saponins (e.g. ginsenosides or panaxosides) biosynthetic pathway. Glycosyltransferase that catalyzes the biosynthesis of ginsenoside F1 from protopanaxatriol (PPT) and the conversion of ginsenoside F1 to ginsenoside Rg1. Triggers C20-OH glycosylation of ginsenoside Rg3 to produce ginsenoside Rd. Mediates the conversion of protopanaxadiol (PPD) to the ginsenoside compound K. This is UDP-glycosyltransferase 101 from Panax ginseng (Korean ginseng).